The sequence spans 161 residues: Large ribosomal subunit protein uL15 (161 aa).

A compositionally biased stretch (basic and acidic residues) spans 1-13; sequence MKLNELRDNEGAA. The disordered stretch occupies residues 1 to 51; sequence MKLNELRDNEGAARKKKRVARGPGSGKGKTAGRGIKGQKSRSGVALNGYEG. The span at 23–35 shows a compositional bias: gly residues; that stretch reads PGSGKGKTAGRGI.

It belongs to the universal ribosomal protein uL15 family. In terms of assembly, part of the 50S ribosomal subunit.

Its function is as follows. Binds to the 23S rRNA. This chain is Large ribosomal subunit protein uL15, found in Cereibacter sphaeroides (strain ATCC 17023 / DSM 158 / JCM 6121 / CCUG 31486 / LMG 2827 / NBRC 12203 / NCIMB 8253 / ATH 2.4.1.) (Rhodobacter sphaeroides).